The chain runs to 1024 residues: Translation initiation factor IF-2 (1024 aa).

Positions 33–425 (SHMSSLEDDT…GRVKKTKTMK (393 aa)) are disordered. 4 stretches are compositionally biased toward basic and acidic residues: residues 43–62 (EARV…DTRV), 135–148 (TPED…ELKP), 167–198 (TPAK…KETS), and 223–263 (SKPD…KEVR). Positions 316–325 (EATQAPTSPQ) are enriched in polar residues. A compositionally biased stretch (basic and acidic residues) spans 332–350 (KPADKGPARAQAHRPDTGR). Positions 365 to 375 (RSKKKEWKKKG) are enriched in basic residues. Basic and acidic residues predominate over residues 394 to 406 (SVVEGKDLYEKGR). The span at 407 to 423 (SGKKGRRKDGRVKKTKT) shows a compositional bias: basic residues. A tr-type G domain is found at 518–687 (SRPPVVTIMG…LLQSEVLELK (170 aa)). Positions 527 to 534 (GHVDHGKT) are G1. 527–534 (GHVDHGKT) serves as a coordination point for GTP. The G2 stretch occupies residues 552–556 (GITQH). A G3 region spans residues 573–576 (DTPG). GTP is bound by residues 573-577 (DTPGH) and 627-630 (NKMD). Residues 627-630 (NKMD) are G4. The interval 663–665 (SAK) is G5.

It belongs to the TRAFAC class translation factor GTPase superfamily. Classic translation factor GTPase family. IF-2 subfamily.

The protein resides in the cytoplasm. In terms of biological role, one of the essential components for the initiation of protein synthesis. Protects formylmethionyl-tRNA from spontaneous hydrolysis and promotes its binding to the 30S ribosomal subunits. Also involved in the hydrolysis of GTP during the formation of the 70S ribosomal complex. The sequence is that of Translation initiation factor IF-2 from Desulforapulum autotrophicum (strain ATCC 43914 / DSM 3382 / VKM B-1955 / HRM2) (Desulfobacterium autotrophicum).